A 197-amino-acid polypeptide reads, in one-letter code: Ras-related protein RabG2 (197 aa).

Residues 13–20 (GDSAVGKT), 61–65 (DTAGQ), and 119–122 (NKCD) contribute to the GTP site. A disordered region spans residues 175–197 (SKPSVVNPGSGGTSNTGGKKKFC). C197 carries the S-geranylgeranyl cysteine lipid modification.

It belongs to the small GTPase superfamily. Rab family.

Its subcellular location is the cell membrane. The polypeptide is Ras-related protein RabG2 (rabG2) (Dictyostelium discoideum (Social amoeba)).